Reading from the N-terminus, the 543-residue chain is UPF0324 membrane protein RB9488 (543 aa).

Over residues 1–22 the composition is skewed to low complexity; that stretch reads MNSNTPSSDNSSPDNVSPDTSD. The segment at 1-41 is disordered; the sequence is MNSNTPSSDNSSPDNVSPDTSDMASAGDDSALATPPPRPSL. The helical transmembrane segment at 51 to 73 threads the bilayer; sequence WWAIWCAALLLLIAFAAVWIGQP. A disordered region spans residues 91 to 120; that stretch reads VETAPENAGPSAEAENEAIETENTAPAENA. A run of 11 helical transmembrane segments spans residues 160 to 182, 189 to 211, 221 to 243, 270 to 292, 307 to 329, 336 to 358, 368 to 390, 403 to 422, 437 to 459, 479 to 496, and 511 to 533; these read ISSSWSGILGVFLIIAALFAFAN, AGAFLAAFPVIFLLATLAYWMSG, EYALWALLVGLIISNTVGTPDFL, LALGLPGVFVAWLVTPVVLITTY, NMVISADMSVCGVSAAIATAAAC, LSLSIGLSLGFTVIMMAVMPAVI, GGAWLGGTIDSTGAVAAAGAVLG, IQNILIGVTAFCVAIYWVTF, IWYRFPKFVLGFVSMSILFSILY, TLRGWFFCLAFVSIGLET, and LVLYVCGQSLNLVLTLVMAYLMF.

The protein belongs to the UPF0324 family.

It localises to the cell membrane. The chain is UPF0324 membrane protein RB9488 from Rhodopirellula baltica (strain DSM 10527 / NCIMB 13988 / SH1).